The following is a 210-amino-acid chain: Redox-sensing transcriptional repressor Rex (210 aa).

Positions 17 to 56 form a DNA-binding region, H-T-H motif; that stretch reads KYYRYLAELMDNDVDRISSKELSEKIGFTASQIRQDLNNF. 91-96 contributes to the NAD(+) binding site; that stretch reads GAGNIG.

This sequence belongs to the transcriptional regulatory Rex family. As to quaternary structure, homodimer.

The protein localises to the cytoplasm. Modulates transcription in response to changes in cellular NADH/NAD(+) redox state. The sequence is that of Redox-sensing transcriptional repressor Rex from Clostridium novyi (strain NT).